A 177-amino-acid chain; its full sequence is Putative pre-16S rRNA nuclease (177 aa).

The interval 1-20 (MVATQQGPDRPGIDDPGRGR) is disordered.

This sequence belongs to the YqgF nuclease family.

It localises to the cytoplasm. In terms of biological role, could be a nuclease involved in processing of the 5'-end of pre-16S rRNA. The protein is Putative pre-16S rRNA nuclease of Rhodococcus erythropolis (strain PR4 / NBRC 100887).